Consider the following 500-residue polypeptide: Chromosomal replication initiator protein DnaA (500 aa).

Residues 1–81 (MVNASGDPVI…LQALRTVTGE (81 aa)) are domain I, interacts with DnaA modulators. The domain II stretch occupies residues 81-155 (ENMFPAFKVV…QQKMNRDPET (75 aa)). Residues 156 to 377 (HLNKNFTFDS…GALTRVTAVA (222 aa)) form a domain III, AAA+ region region. Residues G200, G202, K203, and T204 each contribute to the ATP site. A domain IV, binds dsDNA region spans residues 378-500 (SLSNQPVTRA…TVRLKQSNTN (123 aa)).

The protein belongs to the DnaA family. As to quaternary structure, oligomerizes as a right-handed, spiral filament on DNA at oriC.

Its subcellular location is the cytoplasm. In terms of biological role, plays an essential role in the initiation and regulation of chromosomal replication. ATP-DnaA binds to the origin of replication (oriC) to initiate formation of the DNA replication initiation complex once per cell cycle. Binds the DnaA box (a 9 base pair repeat at the origin) and separates the double-stranded (ds)DNA. Forms a right-handed helical filament on oriC DNA; dsDNA binds to the exterior of the filament while single-stranded (ss)DNA is stabiized in the filament's interior. The ATP-DnaA-oriC complex binds and stabilizes one strand of the AT-rich DNA unwinding element (DUE), permitting loading of DNA polymerase. After initiation quickly degrades to an ADP-DnaA complex that is not apt for DNA replication. Binds acidic phospholipids. The sequence is that of Chromosomal replication initiator protein DnaA from Bifidobacterium longum subsp. infantis (strain ATCC 15697 / DSM 20088 / JCM 1222 / NCTC 11817 / S12).